The chain runs to 326 residues: Ras association domain-containing protein 2 (326 aa).

The Ras-associating domain maps to Tyr-176 to Gln-264. The region spanning Val-272–Ile-319 is the SARAH domain.

As to quaternary structure, interacts directly with activated KRAS in a GTP-dependent manner. Interacts (via SARAH domain) with STK3/MST2 and STK4/MST1. Post-translationally, phosphorylated by STK3/MST2 and STK4/MST1.

Its subcellular location is the nucleus. The protein localises to the cytoplasm. It is found in the chromosome. The protein resides in the centromere. It localises to the kinetochore. In terms of biological role, potential tumor suppressor. Acts as a KRAS-specific effector protein. May promote apoptosis and cell cycle arrest. Stabilizes STK3/MST2 by protecting it from proteasomal degradation. This chain is Ras association domain-containing protein 2 (Rassf2), found in Mus musculus (Mouse).